A 351-amino-acid polypeptide reads, in one-letter code: Translation initiation factor eIF2B subunit beta (351 aa).

The protein belongs to the eIF-2B alpha/beta/delta subunits family. In terms of assembly, component of the translation initiation factor 2B (eIF2B) complex which is a heterodecamer of two sets of five different subunits: alpha, beta, gamma, delta and epsilon. Subunits alpha, beta and delta comprise a regulatory subcomplex and subunits epsilon and gamma comprise a catalytic subcomplex. Within the complex, the hexameric regulatory complex resides at the center, with the two heterodimeric catalytic subcomplexes bound on opposite sides.

The protein resides in the cytoplasm. The protein localises to the cytosol. Activated by the chemical integrated stress response (ISR) inhibitor ISRIB which stimulates guanine nucleotide exchange factor activity for both phosphorylated and unphosphorylated eIF2. Acts as a component of the translation initiation factor 2B (eIF2B) complex, which catalyzes the exchange of GDP for GTP on eukaryotic initiation factor 2 (eIF2) gamma subunit. Its guanine nucleotide exchange factor activity is repressed when bound to eIF2 complex phosphorylated on the alpha subunit, thereby limiting the amount of methionyl-initiator methionine tRNA available to the ribosome and consequently global translation is repressed. The polypeptide is Translation initiation factor eIF2B subunit beta (Eif2b2) (Mus musculus (Mouse)).